The following is a 1018-amino-acid chain: Putative type I restriction enzyme MjaVIIIP endonuclease subunit (1018 aa).

It belongs to the HsdR family. In terms of assembly, the type I restriction/modification system is composed of three polypeptides R, M and S.

It catalyses the reaction Endonucleolytic cleavage of DNA to give random double-stranded fragments with terminal 5'-phosphates, ATP is simultaneously hydrolyzed.. Its function is as follows. The restriction (R) subunit of a type I restriction enzyme that recognizes 5'-GAYN(5)GTAA-3' and cleaves a random distance away. The R subunit is required for both endonuclease and ATPase activities but not for modification. After locating a non-methylated recognition site, the enzyme complex serves as a molecular motor that translocates DNA in an ATP-dependent manner until a collision occurs that triggers cleavage. In Methanocaldococcus jannaschii (strain ATCC 43067 / DSM 2661 / JAL-1 / JCM 10045 / NBRC 100440) (Methanococcus jannaschii), this protein is Putative type I restriction enzyme MjaVIIIP endonuclease subunit.